Here is a 239-residue protein sequence, read N- to C-terminus: MKFIYLFKKESTLQNCINELKLKNPGKEIKIHCYFDFRVNGEDKKTTFCLLKLESNIEIPYETFEILNRKQFEKKFNGLENKLEIKNIPSTSSSPSSSQLFLTLPATSQSSQPKSTNSSTESSSIGQFKNQVDENEINLNKNKIDEFQKDVISLQQKVSSLFQQYNKENEKNKTLNQIFDIQNKIQKMQQQIHFIQNNQESFITLFINYKVKIGSAFIIYIFYNVLFFIIVRFNSFFFF.

The interval 104–127 (LPATSQSSQPKSTNSSTESSSIGQ) is disordered. Residues 107–127 (TSQSSQPKSTNSSTESSSIGQ) show a composition bias toward low complexity. Residues 134–202 (ENEINLNKNK…HFIQNNQESF (69 aa)) adopt a coiled-coil conformation. Residues 211–231 (VKIGSAFIIYIFYNVLFFIIV) traverse the membrane as a helical segment.

The protein localises to the membrane. This is an uncharacterized protein from Dictyostelium discoideum (Social amoeba).